The chain runs to 215 residues: MOB kinase activator-like 1A (215 aa).

The tract at residues 1 to 29 (MSLFGLGSRNQKTFRPKKSAPTGSKGAQL) is disordered. Zn(2+)-binding residues include C80, C85, H162, and H167.

This sequence belongs to the MOB1/phocein family. Isoform 1 is constitutively expressed. Isoform 2 is specifically expressed in flowers bud during sporogenesis and gametogenesis.

Its subcellular location is the cytoplasm. The protein localises to the cytoskeleton. The protein resides in the phragmoplast. In Medicago sativa subsp. falcata (Sickle medic), this protein is MOB kinase activator-like 1A.